The chain runs to 1295 residues: Phosphoribosylformylglycinamidine synthase (1295 aa).

ATP is bound by residues 305–316 (GAATGSGGEIRD), 384–386 (TGY), and Ala676. Asp677, Glu716, Asn720, and Asp884 together coordinate Mg(2+). Ser886 provides a ligand contact to ATP. Residues 1042–1295 (VAILREQGVN…MFRNARKHLG (254 aa)) enclose the Glutamine amidotransferase type-1 domain. Cys1135 serves as the catalytic Nucleophile. Residues His1260 and Glu1262 contribute to the active site.

It in the N-terminal section; belongs to the FGAMS family. As to quaternary structure, monomer.

It localises to the cytoplasm. The enzyme catalyses N(2)-formyl-N(1)-(5-phospho-beta-D-ribosyl)glycinamide + L-glutamine + ATP + H2O = 2-formamido-N(1)-(5-O-phospho-beta-D-ribosyl)acetamidine + L-glutamate + ADP + phosphate + H(+). It functions in the pathway purine metabolism; IMP biosynthesis via de novo pathway; 5-amino-1-(5-phospho-D-ribosyl)imidazole from N(2)-formyl-N(1)-(5-phospho-D-ribosyl)glycinamide: step 1/2. Phosphoribosylformylglycinamidine synthase involved in the purines biosynthetic pathway. Catalyzes the ATP-dependent conversion of formylglycinamide ribonucleotide (FGAR) and glutamine to yield formylglycinamidine ribonucleotide (FGAM) and glutamate. This chain is Phosphoribosylformylglycinamidine synthase, found in Idiomarina loihiensis (strain ATCC BAA-735 / DSM 15497 / L2-TR).